Consider the following 214-residue polypeptide: Dephospho-CoA kinase (214 aa).

Residues 3 to 202 (KIGLTGGIGS…DRWLALAGAA (200 aa)) enclose the DPCK domain. Residue 11 to 16 (GSGKSR) coordinates ATP.

It belongs to the CoaE family.

Its subcellular location is the cytoplasm. It catalyses the reaction 3'-dephospho-CoA + ATP = ADP + CoA + H(+). It participates in cofactor biosynthesis; coenzyme A biosynthesis; CoA from (R)-pantothenate: step 5/5. In terms of biological role, catalyzes the phosphorylation of the 3'-hydroxyl group of dephosphocoenzyme A to form coenzyme A. The protein is Dephospho-CoA kinase of Bordetella pertussis (strain Tohama I / ATCC BAA-589 / NCTC 13251).